We begin with the raw amino-acid sequence, 321 residues long: Beta-ketoacyl-[acyl-carrier-protein] synthase III (321 aa).

Residues Cys113 and His248 contribute to the active site. Residues 249 to 253 (QANAR) form an ACP-binding region. Asn278 is a catalytic residue.

The protein belongs to the thiolase-like superfamily. FabH family. Homodimer.

The protein resides in the cytoplasm. The enzyme catalyses malonyl-[ACP] + acetyl-CoA + H(+) = 3-oxobutanoyl-[ACP] + CO2 + CoA. It functions in the pathway lipid metabolism; fatty acid biosynthesis. Functionally, catalyzes the condensation reaction of fatty acid synthesis by the addition to an acyl acceptor of two carbons from malonyl-ACP. Catalyzes the first condensation reaction which initiates fatty acid synthesis and may therefore play a role in governing the total rate of fatty acid production. Possesses both acetoacetyl-ACP synthase and acetyl transacylase activities. Its substrate specificity determines the biosynthesis of branched-chain and/or straight-chain of fatty acids. The chain is Beta-ketoacyl-[acyl-carrier-protein] synthase III from Erythrobacter litoralis (strain HTCC2594).